Reading from the N-terminus, the 239-residue chain is tRNA (guanine-N(7)-)-methyltransferase (239 aa).

S-adenosyl-L-methionine is bound by residues Glu-69, Glu-94, Asp-121, and Asp-144. The active site involves Asp-144. Lys-148 provides a ligand contact to substrate. The interval 150–155 (RHNKRR) is interaction with RNA. Residues Asp-180 and 217–220 (TKFE) contribute to the substrate site.

It belongs to the class I-like SAM-binding methyltransferase superfamily. TrmB family. In terms of assembly, monomer.

It carries out the reaction guanosine(46) in tRNA + S-adenosyl-L-methionine = N(7)-methylguanosine(46) in tRNA + S-adenosyl-L-homocysteine. The protein operates within tRNA modification; N(7)-methylguanine-tRNA biosynthesis. Catalyzes the formation of N(7)-methylguanine at position 46 (m7G46) in tRNA. This Yersinia pestis (strain Pestoides F) protein is tRNA (guanine-N(7)-)-methyltransferase.